A 706-amino-acid chain; its full sequence is MSCVHNNTSFPVQIEAYLKEVFEKYKELQESKDTSLTARFARVLKYYQFLIYSAFSDPKFGIGQGENTRGLLIYHQMGMGKTILSLSLAISLSHIYNPILIAPKSLHSNFQQSLLKLIKLLYPETTDHSKELQKISRRFRFVSLDAYNMGQQIIKAGGSLNGCLLIVDEAHNLFRGIINSANDKTNARQLYNNIMQAKNIRILFLTGTPCSKDPFEMVPCFNMLSGRILLPLHYERFYTAYVNKTTNSPLNADKLLNRLVGMISYAGNQNELNKLFPTELPLIIEKVEMSPEQYRQYLLARDVENAEKHASSGMYEKMNTAALCLPGSEQESGSSYYVRSRMISIFASEMLTVKEDEKLSEAVQQLPKEAFTENSSPKIACMLKNIKTSPGPVLIYSQFVELGLHVVARFLEIEGYQCLQPLKVLEEGHNTILLHKDGKDLMVKNFAEDEPTHTLVLSSKITRFTLITGKILSKERDMIQQLWNSPLNIHGEVIKILLVSKTGAEGLDLKYGRQVHILEPYWDKAREDQVKARIIRIGSHDALPPEEKTVQPFLYIAVANQKMFYSIPEGSQEQKTIDERFHERGLEKSHLNSAFRDLLKRAAIECAFNGESGCLMCQPTNALLFHENFERDLRLPNPCQPLVKTEVKAYSISYEGKQFFYQKNKEVGLGYTFYEYNPIIKAYIEIKPSNPLYIKLIKHVQAGTTV.

Residues 62–227 (IGQGENTRGL…VPCFNMLSGR (166 aa)) form the Helicase ATP-binding domain. 75–82 (HQMGMGKT) provides a ligand contact to ATP. Residues 168–171 (DEAH) carry the DEAH box motif. The region spanning 417–599 (QCLQPLKVLE…HLNSAFRDLL (183 aa)) is the Helicase C-terminal domain.

The protein belongs to the DEAD box helicase family. DEAH subfamily. Part of the viral DNA-directed RNA polymerase that consists of 8 polII-like subunits (RPB1, RPB2, RPB3, RPB5, RPB6, RPB7, RPB9, RPB10), a capping enzyme and a termination factor.

The protein localises to the virion. Its function is as follows. Putative DNA-dependent ATPase required for providing the needed energy to achieve the termination of early transcripts. The polypeptide is Termination factor NPH-I homolog (Ornithodoros (relapsing fever ticks)).